The chain runs to 30 residues: M-poneritoxin-Ng3a (30 aa).

In terms of tissue distribution, expressed by the venom gland.

The protein localises to the secreted. Its function is as follows. Shows a broad spectrum of activity against both Gram-positive and Gram-negative bacteria. Also has antimicrobial activity against S.cerevisiae. Has insecticidal and non-hemolytic activity. This chain is M-poneritoxin-Ng3a, found in Neoponera goeldii (Ponerine ant).